A 1756-amino-acid chain; its full sequence is Transposon Ty1-PR2 Gag-Pol polyprotein (1756 aa).

3 stretches are compositionally biased toward polar residues: residues 1–10, 48–60, and 127–152; these read MESQQLSNYP, TKAN…TPAS, and QSQF…GNTF. Disordered stretches follow at residues 1 to 93, 126 to 173, and 352 to 421; these read MESQ…MMTQ, PQSQ…RPPP, and GSRN…SKST. A compositionally biased stretch (low complexity) spans 153 to 165; sequence TDSSSADSDMTST. The RNA-binding stretch occupies residues 299–401; sequence NNGIHINNKV…NSKSKTARAH (103 aa). Residues 402–418 are compositionally biased toward low complexity; the sequence is NVSTSNNSPSTDNDSIS. The active-site For protease activity; shared with dimeric partner is Asp461. An integrase-type zinc finger-like region spans residues 583 to 640; that stretch reads NVHTSESTRKYPYPFIHRMLAHANAQTIRYSLKNNTITYFNESDVDWSSAIDYQCPDC. Residues 660–836 form the Integrase catalytic domain; sequence NSYEPFQYLH…AGLDISTLLP (177 aa). Residues Asp671 and Asp736 each contribute to the Mg(2+) site. Disordered regions lie at residues 957-1088, 1093-1112, and 1131-1188; these read SKAV…ETEK, RSPS…NIVP, and DLPL…DNET. The span at 961–970 shows a compositional bias: low complexity; it reads SPTDSTPPST. Polar residues predominate over residues 1006-1016; sequence STPQISNIEST. The span at 1039–1054 shows a compositional bias: basic and acidic residues; the sequence is ESSHASKSKDFRHSDS. Composition is skewed to polar residues over residues 1055–1083 and 1102–1112; these read YSEN…QISD and PENNSSHNIVP. A Bipartite nuclear localization signal motif is present at residues 1179 to 1213; it reads KKRSLEDNETEIKVSRDTWNTKNMRSLEPPRSKKR. The 139-residue stretch at 1339–1477 folds into the Reverse transcriptase Ty1/copia-type domain; the sequence is NNYYITQLDI…DILGLEIKYQ (139 aa). 6 residues coordinate Mg(2+): Asp1347, Asp1428, Asp1429, Asp1611, Glu1653, and Asp1686. One can recognise an RNase H Ty1/copia-type domain in the interval 1611 to 1753; sequence DASYGNQPYY…IKTFKLLTNK (143 aa).

As to quaternary structure, the capsid protein forms a homotrimer, from which the VLPs are assembled. The protease is a homodimer, whose active site consists of two apposed aspartic acid residues. Post-translationally, initially, virus-like particles (VLPs) are composed of the structural unprocessed proteins Gag and Gag-Pol, and also contain the host initiator methionine tRNA (tRNA(i)-Met) which serves as a primer for minus-strand DNA synthesis, and a dimer of genomic Ty RNA. Processing of the polyproteins occurs within the particle and proceeds by an ordered pathway, called maturation. First, the protease (PR) is released by autocatalytic cleavage of the Gag-Pol polyprotein yielding capsid protein p45 and a Pol-p154 precursor protein. This cleavage is a prerequisite for subsequent processing of Pol-p154 at the remaining sites to release the mature structural and catalytic proteins. Maturation takes place prior to the RT reaction and is required to produce transposition-competent VLPs.

Its subcellular location is the cytoplasm. The protein localises to the nucleus. The enzyme catalyses DNA(n) + a 2'-deoxyribonucleoside 5'-triphosphate = DNA(n+1) + diphosphate. It carries out the reaction Endonucleolytic cleavage to 5'-phosphomonoester.. Capsid protein (CA) is the structural component of the virus-like particle (VLP), forming the shell that encapsulates the retrotransposons dimeric RNA genome. The particles are assembled from trimer-clustered units and there are holes in the capsid shells that allow for the diffusion of macromolecules. CA also has nucleocapsid-like chaperone activity, promoting primer tRNA(i)-Met annealing to the multipartite primer-binding site (PBS), dimerization of Ty1 RNA and initiation of reverse transcription. Functionally, the aspartyl protease (PR) mediates the proteolytic cleavages of the Gag and Gag-Pol polyproteins after assembly of the VLP. Its function is as follows. Reverse transcriptase/ribonuclease H (RT) is a multifunctional enzyme that catalyzes the conversion of the retro-elements RNA genome into dsDNA within the VLP. The enzyme displays a DNA polymerase activity that can copy either DNA or RNA templates, and a ribonuclease H (RNase H) activity that cleaves the RNA strand of RNA-DNA heteroduplexes during plus-strand synthesis and hydrolyzes RNA primers. The conversion leads to a linear dsDNA copy of the retrotransposon that includes long terminal repeats (LTRs) at both ends. In terms of biological role, integrase (IN) targets the VLP to the nucleus, where a subparticle preintegration complex (PIC) containing at least integrase and the newly synthesized dsDNA copy of the retrotransposon must transit the nuclear membrane. Once in the nucleus, integrase performs the integration of the dsDNA into the host genome. This Saccharomyces cerevisiae (strain ATCC 204508 / S288c) (Baker's yeast) protein is Transposon Ty1-PR2 Gag-Pol polyprotein (TY1B-PR2).